The primary structure comprises 359 residues: UDP-N-acetylglucosamine--N-acetylmuramyl-(pentapeptide) pyrophosphoryl-undecaprenol N-acetylglucosamine transferase (359 aa).

UDP-N-acetyl-alpha-D-glucosamine-binding positions include 15-17, Asn-127, Arg-166, Ser-191, Ile-245, 264-269, and Gln-290; these read TGG and ALTVSE.

It belongs to the glycosyltransferase 28 family. MurG subfamily.

It is found in the cell inner membrane. It catalyses the reaction di-trans,octa-cis-undecaprenyl diphospho-N-acetyl-alpha-D-muramoyl-L-alanyl-D-glutamyl-meso-2,6-diaminopimeloyl-D-alanyl-D-alanine + UDP-N-acetyl-alpha-D-glucosamine = di-trans,octa-cis-undecaprenyl diphospho-[N-acetyl-alpha-D-glucosaminyl-(1-&gt;4)]-N-acetyl-alpha-D-muramoyl-L-alanyl-D-glutamyl-meso-2,6-diaminopimeloyl-D-alanyl-D-alanine + UDP + H(+). Its pathway is cell wall biogenesis; peptidoglycan biosynthesis. Cell wall formation. Catalyzes the transfer of a GlcNAc subunit on undecaprenyl-pyrophosphoryl-MurNAc-pentapeptide (lipid intermediate I) to form undecaprenyl-pyrophosphoryl-MurNAc-(pentapeptide)GlcNAc (lipid intermediate II). The sequence is that of UDP-N-acetylglucosamine--N-acetylmuramyl-(pentapeptide) pyrophosphoryl-undecaprenol N-acetylglucosamine transferase from Pseudomonas putida (strain ATCC 47054 / DSM 6125 / CFBP 8728 / NCIMB 11950 / KT2440).